Here is a 669-residue protein sequence, read N- to C-terminus: uncharacterized protein (669 aa).

Transmembrane regions (helical) follow at residues 9–29 (PLVIGVTLFFILLLMAMIFIA), 48–68 (FSWFYVLTFSVFLGFLLILSV), 87–107 (FLSWLAMLFAAGMGVGLMFFG), 139–159 (WGIHAWAVYGTIALALAYFGF), 186–206 (AIDVMALLATLFGIITTLGFG), 224–244 (SFALQVGVIVVVMCLAVFSAI), 259–279 (LTLAFCLLLFVLISGPTLYLL), 314–334 (WTVLYWAWWCSWAPFVGLFIA), 345–365 (FIFGVLVIPSLFGILWFTVFG), 397–417 (YLPLPTITGFVSLLVILLFFI), 444–464 (AIMWGTLMSVVAIVLMQSGGL), and 470–490 (MTLIVALPFALLMLVMCFSLW).

This sequence belongs to the BCCT transporter (TC 2.A.15) family.

The protein resides in the cell inner membrane. This is an uncharacterized protein from Haemophilus influenzae (strain ATCC 51907 / DSM 11121 / KW20 / Rd).